Here is a 248-residue protein sequence, read N- to C-terminus: MQLIPAIDLKDGRCVRLRQGRMDDETVFSDDPVAMAGRWVAAGTRRLHLVDLNGAVAGKPVNAEIIHRIATRYPDLRIQVGGGIRDLDTIRGYREAGVDDLIIGTQAVRRPEFVTEACQAFPGHIIVGLDARDGRVATDGWEQVSEVRAVDLARRFEAAGVNAIVFTDIGRDGMMKGVNIEATRELARAITIPVIASGGVSSLEDVRALCAAAGDGISGAIVGRALYEGSLDLAEAQGLADELCGVKP.

D8 (proton acceptor) is an active-site residue. The active-site Proton donor is the D130.

Belongs to the HisA/HisF family.

It localises to the cytoplasm. The catalysed reaction is 1-(5-phospho-beta-D-ribosyl)-5-[(5-phospho-beta-D-ribosylamino)methylideneamino]imidazole-4-carboxamide = 5-[(5-phospho-1-deoxy-D-ribulos-1-ylimino)methylamino]-1-(5-phospho-beta-D-ribosyl)imidazole-4-carboxamide. Its pathway is amino-acid biosynthesis; L-histidine biosynthesis; L-histidine from 5-phospho-alpha-D-ribose 1-diphosphate: step 4/9. In Alkalilimnicola ehrlichii (strain ATCC BAA-1101 / DSM 17681 / MLHE-1), this protein is 1-(5-phosphoribosyl)-5-[(5-phosphoribosylamino)methylideneamino] imidazole-4-carboxamide isomerase.